A 136-amino-acid polypeptide reads, in one-letter code: Large ribosomal subunit protein bL21 (136 aa).

Belongs to the bacterial ribosomal protein bL21 family. As to quaternary structure, part of the 50S ribosomal subunit. Contacts protein L20.

Its function is as follows. This protein binds to 23S rRNA in the presence of protein L20. This Trichodesmium erythraeum (strain IMS101) protein is Large ribosomal subunit protein bL21.